We begin with the raw amino-acid sequence, 423 residues long: 5-hydroxytryptamine receptor 1A-alpha (423 aa).

The Extracellular segment spans residues 1 to 47 (MDLRATSSNDSNATSGYSDTAAVDWDEGENATGSGSLPDPELSYQII). N-linked (GlcNAc...) asparagine glycosylation is found at Asn9, Asn12, and Asn30. Residues 48 to 68 (TSLFLGALILCSIFGNSCVVA) traverse the membrane as a helical segment. Residues 69–82 (AIALERSLQNVANY) are Cytoplasmic-facing. The helical transmembrane segment at 83 to 107 (LIGSLAVTDLMVSVLVLPMAALYQV) threads the bilayer. Residues 108-116 (LNKWTLGQD) are Extracellular-facing. Residues 117–141 (ICDLFIALDVLCCTSSILHLCAIAL) traverse the membrane as a helical segment. Cys118 and Cys196 are disulfide-bonded. Residues Asp125 and Cys129 each coordinate serotonin. A DRY motif; important for ligand-induced conformation changes motif is present at residues 142–144 (DRY). At 142–161 (DRYWAITDPIDYVNKRTPRR) the chain is on the cytoplasmic side. A helical membrane pass occupies residues 162–183 (AAVLISVTWLIGFSISIPPMLG). Over 184–202 (WRSAEDRANPDACIISQDP) the chain is Extracellular. The helical transmembrane segment at 203 to 225 (GYTIYSTFGAFYIPLILMLVLYG) threads the bilayer. Residues 226 to 347 (RIFKAARFRI…LARERKTVKT (122 aa)) lie on the Cytoplasmic side of the membrane. Residues 311–332 (LPLPNTPQSSSHENINEKTTGT) are disordered. The segment covering 316–329 (TPQSSSHENINEKT) has biased composition (polar residues). The 1D-myo-inositol 4-phosphate site is built by Ser320, Lys346, Thr347, and Gly353. The chain crosses the membrane as a helical span at residues 348 to 371 (LGIIMGTFIFCWLPFFIVALVLPF). At 372–379 (CAENCYMP) the chain is on the extracellular side. The helical transmembrane segment at 380–404 (EWLGAVINWLGYSNSLLNPIIYAYF) threads the bilayer. The NPxxY motif; important for ligand-induced conformation changes and signaling signature appears at 397 to 401 (NPIIY). Phe404, Asn405, and Lys406 together coordinate 1D-myo-inositol 4-phosphate. At 405–423 (NKDFQSAFKKILRCKFHRH) the chain is on the cytoplasmic side.

This sequence belongs to the G-protein coupled receptor 1 family. 5-hydroxytryptamine receptor subfamily.

Its subcellular location is the cell membrane. With respect to regulation, G-protein coupled receptor activity is regulated by lipids: phosphatidylinositol 4-phosphate increases HTR1A-mediated activity. G-protein coupled receptor for 5-hydroxytryptamine (serotonin). Also functions as a receptor for various drugs and psychoactive substances. Ligand binding causes a conformation change that triggers signaling via guanine nucleotide-binding proteins (G proteins) and modulates the activity of downstream effectors, such as adenylate cyclase. HTR1A is coupled to G(i)/G(o) G alpha proteins and mediates inhibitory neurotransmission: signaling inhibits adenylate cyclase activity and activates a phosphatidylinositol-calcium second messenger system that regulates the release of Ca(2+) ions from intracellular stores. Beta-arrestin family members regulate signaling by mediating both receptor desensitization and resensitization processes. This Takifugu rubripes (Japanese pufferfish) protein is 5-hydroxytryptamine receptor 1A-alpha (htr1aa).